Reading from the N-terminus, the 760-residue chain is Transferrin receptor protein 1 (760 aa).

The Cytoplasmic portion of the chain corresponds to Met-1–Ser-65. The segment at Met-1–Cys-67 is mediates interaction with SH3BP4. Phosphoserine occurs at positions 10 and 19. Tyr-20 bears the Phosphotyrosine mark. The Endocytosis signal motif lies at Tyr-20–Phe-23. Thr-21 bears the Phosphothreonine mark. A Phosphoserine modification is found at Ser-24. The Stop-transfer sequence signature appears at Lys-58 to Arg-61. 2 S-palmitoyl cysteine lipidation sites follow: Cys-62 and Cys-67. The helical; Signal-anchor for type II membrane protein transmembrane segment at Ile-66–Leu-86 threads the bilayer. The Extracellular portion of the chain corresponds to Gly-87–Phe-760. The PA domain occupies Ser-223–Phe-313. N-linked (GlcNAc...) asparagine glycans are attached at residues Asn-251 and Asn-317. A ligand-binding region spans residues Thr-569 to Phe-760. Residues Arg-646–Asp-648 carry the Cell attachment site motif. 2 N-linked (GlcNAc...) asparagine glycosylation sites follow: Asn-722 and Asn-727.

It belongs to the peptidase M28 family. M28B subfamily. In terms of assembly, homodimer; disulfide-linked. Binds one transferrin or HFE molecule per subunit. Interacts with SH3BP4. Interacts with STEAP3; facilitates TFRC endocytosis in erythroid precursor cells. Post-translationally, stearoylated by ZDHHC6 which inhibits TFRC-mediated activation of the JNK pathway and promotes mitochondrial fragmentation. Stearoylation does not affect iron uptake.

The protein resides in the cell membrane. It is found in the melanosome. Its function is as follows. Cellular uptake of iron occurs via receptor-mediated endocytosis of ligand-occupied transferrin receptor into specialized endosomes. Endosomal acidification leads to iron release. The apotransferrin-receptor complex is then recycled to the cell surface with a return to neutral pH and the concomitant loss of affinity of apotransferrin for its receptor. Transferrin receptor is necessary for development of erythrocytes and the nervous system. Positively regulates T and B cell proliferation through iron uptake. Acts as a lipid sensor that regulates mitochondrial fusion by regulating activation of the JNK pathway. When dietary levels of stearate (C18:0) are low, promotes activation of the JNK pathway, resulting in HUWE1-mediated ubiquitination and subsequent degradation of the mitofusin MFN2 and inhibition of mitochondrial fusion. When dietary levels of stearate (C18:0) are high, TFRC stearoylation inhibits activation of the JNK pathway and thus degradation of the mitofusin MFN2. Mediates uptake of NICOL1 into fibroblasts where it may regulate extracellular matrix production. The chain is Transferrin receptor protein 1 (TFRC) from Pongo abelii (Sumatran orangutan).